A 513-amino-acid chain; its full sequence is Calcium-binding mitochondrial carrier protein SCaMC-2 (513 aa).

Residues 1 to 233 (MARPRSLVSP…EKQTGMWWRH (233 aa)) lie on the Mitochondrial intermembrane side of the membrane. EF-hand domains follow at residues 55–90 (EHET…LGVH), 91–124 (RTEL…RDHE), 122–157 (DHEK…LGVN), and 158–193 (ISEQ…HPAE). Asp-68, Asn-70, Asp-72, Asp-79, Asp-104, Asp-106, Asp-108, Gln-110, and Glu-115 together coordinate Ca(2+). Solcar repeat units follow at residues 228 to 314 (GMWW…MKRI), 322 to 407 (LGIH…LKNA), and 419 to 507 (PGVF…LKLT). A helical transmembrane segment spans residues 234 to 251 (LVAGGGAGAVSRTCTAPL). Residues 252-288 (DRLKVLMQVHASRSNNMSMLGGFTQMIREGGIRSLWR) are Mitochondrial matrix-facing. Residues 289 to 308 (GNGINVIKIAPESAIKFMAY) traverse the membrane as a helical segment. Topologically, residues 309-331 (EQMKRIIGSDQETLGIHERLVAG) are mitochondrial intermembrane. The helical transmembrane segment at 332–345 (SLAGVIAQSSIYPM) threads the bilayer. At 346 to 381 (EVLKTRMALRKTGQYQGMLDCGKKILLKEGVSAFYK) the chain is on the mitochondrial matrix side. Residues 382 to 401 (GYVPNMLGIIPYAGIDLAVY) form a helical membrane-spanning segment. Over 402-424 (ETLKNAWLQRYATSSADPGVFVL) the chain is Mitochondrial intermembrane. The chain crosses the membrane as a helical span at residues 425-442 (LACGTISSTCGQLASYPL). The Mitochondrial matrix segment spans residues 443-481 (ALVRTRMQAEASVEGAPQMTMSKLFKHIVKTEGAFGLYR). A helical transmembrane segment spans residues 482-501 (GLAPNFMKVIPAVSISYVVY). The Mitochondrial intermembrane portion of the chain corresponds to 502–513 (ENLKLTLGVQSR).

Belongs to the mitochondrial carrier (TC 2.A.29) family.

The protein localises to the mitochondrion inner membrane. In terms of biological role, calcium-dependent mitochondrial solute carrier. This is Calcium-binding mitochondrial carrier protein SCaMC-2 (slc25a25) from Xenopus tropicalis (Western clawed frog).